A 946-amino-acid chain; its full sequence is Bifunctional glutamine synthetase adenylyltransferase/adenylyl-removing enzyme (946 aa).

The tract at residues 1–440 (MKPLSSPLQQ…VFNELIGDDE (440 aa)) is adenylyl removase. The segment at 449–946 (SEQWRELWQD…ASWQKWLVEE (498 aa)) is adenylyl transferase.

Belongs to the GlnE family. Mg(2+) is required as a cofactor.

It catalyses the reaction [glutamine synthetase]-O(4)-(5'-adenylyl)-L-tyrosine + phosphate = [glutamine synthetase]-L-tyrosine + ADP. The catalysed reaction is [glutamine synthetase]-L-tyrosine + ATP = [glutamine synthetase]-O(4)-(5'-adenylyl)-L-tyrosine + diphosphate. Its function is as follows. Involved in the regulation of glutamine synthetase GlnA, a key enzyme in the process to assimilate ammonia. When cellular nitrogen levels are high, the C-terminal adenylyl transferase (AT) inactivates GlnA by covalent transfer of an adenylyl group from ATP to specific tyrosine residue of GlnA, thus reducing its activity. Conversely, when nitrogen levels are low, the N-terminal adenylyl removase (AR) activates GlnA by removing the adenylyl group by phosphorolysis, increasing its activity. The regulatory region of GlnE binds the signal transduction protein PII (GlnB) which indicates the nitrogen status of the cell. This chain is Bifunctional glutamine synthetase adenylyltransferase/adenylyl-removing enzyme, found in Shigella boydii serotype 18 (strain CDC 3083-94 / BS512).